Consider the following 536-residue polypeptide: CTP synthase (536 aa).

The amidoligase domain stretch occupies residues Met1–Leu267. Ser13 is a binding site for CTP. Ser13 lines the UTP pocket. ATP-binding positions include Ser14–Ile19 and Asp71. Residues Asp71 and Glu141 each coordinate Mg(2+). Residues Asp148–Glu150, Lys188–Gln193, and Lys224 contribute to the CTP site. UTP-binding positions include Lys188–Gln193 and Lys224. Residues Lys292 to Gln534 form the Glutamine amidotransferase type-1 domain. L-glutamine is bound at residue Gly354. The active-site Nucleophile; for glutamine hydrolysis is Cys381. L-glutamine-binding positions include Leu382–Gln385, Glu405, and Arg462. Residues His507 and Glu509 contribute to the active site.

Belongs to the CTP synthase family. In terms of assembly, homotetramer.

The catalysed reaction is UTP + L-glutamine + ATP + H2O = CTP + L-glutamate + ADP + phosphate + 2 H(+). The enzyme catalyses L-glutamine + H2O = L-glutamate + NH4(+). It catalyses the reaction UTP + NH4(+) + ATP = CTP + ADP + phosphate + 2 H(+). It functions in the pathway pyrimidine metabolism; CTP biosynthesis via de novo pathway; CTP from UDP: step 2/2. Its activity is regulated as follows. Allosterically activated by GTP, when glutamine is the substrate; GTP has no effect on the reaction when ammonia is the substrate. The allosteric effector GTP functions by stabilizing the protein conformation that binds the tetrahedral intermediate(s) formed during glutamine hydrolysis. Inhibited by the product CTP, via allosteric rather than competitive inhibition. Catalyzes the ATP-dependent amination of UTP to CTP with either L-glutamine or ammonia as the source of nitrogen. Regulates intracellular CTP levels through interactions with the four ribonucleotide triphosphates. This Prochlorococcus marinus (strain MIT 9312) protein is CTP synthase.